The primary structure comprises 1065 residues: Carbamoyl phosphate synthase large chain (1065 aa).

The carboxyphosphate synthetic domain stretch occupies residues 1–401 (MPKRRDIETI…SLLKAVRSLE (401 aa)). Residues Arg129, Arg169, Gly175, Gly176, Arg208, Ile210, Glu215, Gly241, Ile242, His243, Gln284, and Glu298 each contribute to the ATP site. The 195-residue stretch at 133–327 (RALMNELGEP…IAKLAAKIAV (195 aa)) folds into the ATP-grasp 1 domain. Residues Gln284, Glu298, and Asn300 each contribute to the Mg(2+) site. Gln284, Glu298, and Asn300 together coordinate Mn(2+). Residues 402-546 (IGVHHLELNE…YSTYEEENES (145 aa)) form an oligomerization domain region. Residues 547 to 929 (IVTEKPSVIV…ALYKGLVASG (383 aa)) are carbamoyl phosphate synthetic domain. One can recognise an ATP-grasp 2 domain in the interval 671-861 (EQALSELGIP…MANLATKAIL (191 aa)). The ATP site is built by Arg707, Arg746, Ile748, Glu752, Gly777, Val778, His779, Ser780, Gln820, and Glu832. 3 residues coordinate Mg(2+): Gln820, Glu832, and Asn834. Mn(2+) is bound by residues Gln820, Glu832, and Asn834. The MGS-like domain maps to 930–1065 (IHIQPHGAVL…TAMTEGLVRS (136 aa)). The segment at 930–1065 (IHIQPHGAVL…TAMTEGLVRS (136 aa)) is allosteric domain.

It belongs to the CarB family. Composed of two chains; the small (or glutamine) chain promotes the hydrolysis of glutamine to ammonia, which is used by the large (or ammonia) chain to synthesize carbamoyl phosphate. Tetramer of heterodimers (alpha,beta)4. Mg(2+) is required as a cofactor. The cofactor is Mn(2+).

The enzyme catalyses hydrogencarbonate + L-glutamine + 2 ATP + H2O = carbamoyl phosphate + L-glutamate + 2 ADP + phosphate + 2 H(+). The catalysed reaction is hydrogencarbonate + NH4(+) + 2 ATP = carbamoyl phosphate + 2 ADP + phosphate + 2 H(+). The protein operates within amino-acid biosynthesis; L-arginine biosynthesis; carbamoyl phosphate from bicarbonate: step 1/1. It functions in the pathway pyrimidine metabolism; UMP biosynthesis via de novo pathway; (S)-dihydroorotate from bicarbonate: step 1/3. Large subunit of the glutamine-dependent carbamoyl phosphate synthetase (CPSase). CPSase catalyzes the formation of carbamoyl phosphate from the ammonia moiety of glutamine, carbonate, and phosphate donated by ATP, constituting the first step of 2 biosynthetic pathways, one leading to arginine and/or urea and the other to pyrimidine nucleotides. The large subunit (synthetase) binds the substrates ammonia (free or transferred from glutamine from the small subunit), hydrogencarbonate and ATP and carries out an ATP-coupled ligase reaction, activating hydrogencarbonate by forming carboxy phosphate which reacts with ammonia to form carbamoyl phosphate. In Bacillus caldolyticus, this protein is Carbamoyl phosphate synthase large chain.